Here is a 445-residue protein sequence, read N- to C-terminus: Sensor protein kinase CarS (445 aa).

A signal peptide spans 1–24 (MRSIQRRLSVGLFAVLLVVGLVLA). A helical transmembrane segment spans residues 150–170 (FARVQWMGLGAGALALLLVLL). Residues 177–228 (RRSLRPLEEVRLQIAQLQQGQRSQLDNQAPEELEPLVEQINHLLAHTEETLK) form the HAMP domain. One can recognise a Histidine kinase domain in the interval 236–438 (NLGHALKTPL…RVSVELPLQK (203 aa)). The residue at position 239 (histidine 239) is a Phosphohistidine; by autocatalysis.

The protein localises to the membrane. The enzyme catalyses ATP + protein L-histidine = ADP + protein N-phospho-L-histidine.. Functionally, member of the two-component regulatory system CarS/CarR that regulates the expression of multiple genes involved in calcium signaling and homeostasis including CarO and CarP. May function as a membrane-associated protein kinase that phosphorylates CarR in response to environmental signals leading to activation of specific gene promoters. This is Sensor protein kinase CarS (carS) from Pseudomonas aeruginosa (strain ATCC 15692 / DSM 22644 / CIP 104116 / JCM 14847 / LMG 12228 / 1C / PRS 101 / PAO1).